A 367-amino-acid polypeptide reads, in one-letter code: Molybdopterin synthase catalytic subunit (367 aa).

Residues 101–102 (HR), Lys-117, and 124–126 (KKE) each bind substrate.

The protein belongs to the MoaE family. MOCS2B subfamily. Heterotetramer; composed of 2 small (Mocs2A) and 2 large (Mocs2B) subunits.

The protein resides in the cytoplasm. It carries out the reaction 2 [molybdopterin-synthase sulfur-carrier protein]-C-terminal-Gly-aminoethanethioate + cyclic pyranopterin phosphate + H2O = molybdopterin + 2 [molybdopterin-synthase sulfur-carrier protein]-C-terminal Gly-Gly + 2 H(+). It functions in the pathway cofactor biosynthesis; molybdopterin biosynthesis. Catalytic subunit of the molybdopterin synthase complex, a complex that catalyzes the conversion of precursor Z into molybdopterin. Acts by mediating the incorporation of 2 sulfur atoms from thiocarboxylated Mocs2A into precursor Z to generate a dithiolene group. This is Molybdopterin synthase catalytic subunit from Drosophila erecta (Fruit fly).